A 527-amino-acid polypeptide reads, in one-letter code: Benzoate--CoA ligase (527 aa).

The protein belongs to the ATP-dependent AMP-binding enzyme family. Benzoate-CoA ligase subfamily. As to quaternary structure, monomer.

It carries out the reaction benzoate + ATP + CoA = benzoyl-CoA + AMP + diphosphate. Catalyzes the ligation of benzoate and CoA to form benzoyl-CoA at the expense of ATP. The enzyme also ligates 2-aminobenzoate and CoA. The enzyme shows activity toward a number of benzoate derivatives. This is Benzoate--CoA ligase (bclA) from Thauera aromatica.